A 499-amino-acid polypeptide reads, in one-letter code: Glycerol kinase (499 aa).

T13 lines the ADP pocket. The ATP site is built by T13, T14, and S15. T13 serves as a coordination point for sn-glycerol 3-phosphate. R17 is an ADP binding site. 4 residues coordinate sn-glycerol 3-phosphate: R83, E84, Y135, and D244. R83, E84, Y135, D244, and Q245 together coordinate glycerol. T266 and G310 together coordinate ADP. T266, G310, Q314, and G411 together coordinate ATP. The ADP site is built by G411 and N415.

This sequence belongs to the FGGY kinase family.

It catalyses the reaction glycerol + ATP = sn-glycerol 3-phosphate + ADP + H(+). It functions in the pathway polyol metabolism; glycerol degradation via glycerol kinase pathway; sn-glycerol 3-phosphate from glycerol: step 1/1. Inhibited by fructose 1,6-bisphosphate (FBP). Its function is as follows. Key enzyme in the regulation of glycerol uptake and metabolism. Catalyzes the phosphorylation of glycerol to yield sn-glycerol 3-phosphate. This chain is Glycerol kinase, found in Pseudothermotoga lettingae (strain ATCC BAA-301 / DSM 14385 / NBRC 107922 / TMO) (Thermotoga lettingae).